The sequence spans 329 residues: NADH-quinone oxidoreductase subunit H (329 aa).

A run of 8 helical transmembrane segments spans residues 11 to 31, 81 to 101, 114 to 134, 154 to 174, 187 to 207, 238 to 258, 270 to 290, and 309 to 329; these read IVVAILKAIVILLVVVVCGAL, LIFTLAPIVAMSALLMAFAVV, IGLLFFFAMAGLAVYAVLFAG, ISYEVFMALALMGIVAQTGSF, TWFIIPQFLGFCTFFIAGVAV, FFVGEYIGIVLISALLVTLFF, QLSFIWFALKTAFFIMLFILL, and FCLPLTLLNLLVTGAFVLAAQ.

Belongs to the complex I subunit 1 family. NDH-1 is composed of 13 different subunits. Subunits NuoA, H, J, K, L, M, N constitute the membrane sector of the complex.

The protein localises to the cell inner membrane. It catalyses the reaction a quinone + NADH + 5 H(+)(in) = a quinol + NAD(+) + 4 H(+)(out). Its function is as follows. NDH-1 shuttles electrons from NADH, via FMN and iron-sulfur (Fe-S) centers, to quinones in the respiratory chain. The immediate electron acceptor for the enzyme in this species is believed to be ubiquinone. Couples the redox reaction to proton translocation (for every two electrons transferred, four hydrogen ions are translocated across the cytoplasmic membrane), and thus conserves the redox energy in a proton gradient. This subunit may bind ubiquinone. This chain is NADH-quinone oxidoreductase subunit H, found in Azotobacter vinelandii (strain DJ / ATCC BAA-1303).